The primary structure comprises 440 residues: MDIAGKNREQWLAAYPLLQQIVLTKEVWWANPNRQPASEGLARLSLKEEDVKEAEQRLRRFAPYIASVFPETKGAGGLIESPLIDIPTMKHKLDQRFGQNVPGRLLLKGDHALPISGSIKARGGIYEVLKHAESLLVDQQILTKQDDYSLIATDAVQSFFSSYAIVVGSTGNLGLSIGIISAKLGFRVTVHMSDDAKQWKKDMLREKGVRVVEHSADYSKAVEEGRKESDADPNSYFIDDEHSIDLFVGYAVAAFRLKEQLQEKGIAVTKDQPLHVYLPCGVGGGPGGVAFGLKLVFGDAVRCFFAEPTHSPCMLIGMLTGKHQHISVQDFGIDNQTAADGLAVGRPSGFVGRMMAPLLEGIYTIADPMLYTLLADLADAEGLYLEPSAVAGLYGPVQLEKRGLYTDAATHLVWATGGSMVPKEIMETDYQLGVNLRTEQ.

Residue Lys-120 is modified to N6-(pyridoxal phosphate)lysine.

Belongs to the serine/threonine dehydratase family. DsdA subfamily. Pyridoxal 5'-phosphate serves as cofactor.

It catalyses the reaction D-serine = pyruvate + NH4(+). In Shouchella clausii (strain KSM-K16) (Alkalihalobacillus clausii), this protein is Probable D-serine dehydratase.